The sequence spans 694 residues: PTS system fructose-specific EIIABC component (694 aa).

In terms of domain architecture, PTS EIIA type-2 spans 4–149 (PLLSAELFFN…NGLINLIDSF (146 aa)). The active-site Tele-phosphohistidine intermediate; for EIIA activity is H68. Position 68 is a phosphohistidine; by HPr (H68). Residues 179–275 (FVAVTACPTG…PQTVYDQVVK (97 aa)) form the PTS EIIB type-2 domain. The active-site Phosphocysteine intermediate; for EIIB activity is C185. Position 185 is a phosphocysteine; by EIIA (C185). Residues 310 to 687 (IYRAILSGVS…NLLVVRKKTK (378 aa)) enclose the PTS EIIC type-2 domain. Transmembrane regions (helical) follow at residues 318–338 (VSYMLPFVVFGGILIAIAFLI), 364–384 (GGLSFGLIVPILSAYIAFALV), 390–410 (LPGFIVGLISAGKFLLNIDIV), 422–442 (VSSGFFGAIFGGLLAAVLIIV), 461–481 (ILFIPLLGTLVTAALFWVINI), 502–522 (LAPLLGLVIGLMMCFDLGGPV), 542–562 (VAMASAILSGMVPPLGIAIAA), 576–596 (AAYACYVMGLSFISEGAIPFV), 602–622 (IMLAANLIGGAVCGVLTGAFA), and 655–675 (GVGLALLALIVSSFISAGIII).

The protein resides in the cell membrane. It carries out the reaction D-fructose(out) + N(pros)-phospho-L-histidyl-[protein] = D-fructose 1-phosphate(in) + L-histidyl-[protein]. The phosphoenolpyruvate-dependent sugar phosphotransferase system (sugar PTS), a major carbohydrate active transport system, catalyzes the phosphorylation of incoming sugar substrates concomitantly with their translocation across the cell membrane. This system is involved in fructose transport. This is PTS system fructose-specific EIIABC component from Mycoplasma pneumoniae (strain ATCC 29342 / M129 / Subtype 1) (Mycoplasmoides pneumoniae).